Reading from the N-terminus, the 238-residue chain is Flagellar L-ring protein (238 aa).

The first 23 residues, 1 to 23 (MIKLFICQKKYYLTAIFLLTIQS), serve as a signal peptide directing secretion. The N-palmitoyl cysteine moiety is linked to residue cysteine 24. The S-diacylglycerol cysteine moiety is linked to residue cysteine 24.

It belongs to the FlgH family. The basal body constitutes a major portion of the flagellar organelle and consists of four rings (L,P,S, and M) mounted on a central rod.

It localises to the cell outer membrane. Its subcellular location is the bacterial flagellum basal body. Assembles around the rod to form the L-ring and probably protects the motor/basal body from shearing forces during rotation. In Buchnera aphidicola subsp. Acyrthosiphon pisum (strain 5A), this protein is Flagellar L-ring protein.